The primary structure comprises 404 residues: RING-H2 finger protein ATL11 (404 aa).

Residues 1-36 (MNPKGRTNLNRSIIGGHDHGSILQLLLFLLLLSSHG) form the signal peptide. Residues 64-84 (AILMIVLVSVFFFLGFFSVYI) traverse the membrane as a helical segment. Residues 144 to 186 (CSVCLNEFEDDETLRLIPKCCHVFHPGCIDAWLRSHTTCPLCR) form an RING-type; atypical zinc finger. 2 disordered regions span residues 339-361 (PYRT…VRAS) and 385-404 (VGEN…SNTV).

It belongs to the RING-type zinc finger family. ATL subfamily.

It is found in the membrane. It carries out the reaction S-ubiquitinyl-[E2 ubiquitin-conjugating enzyme]-L-cysteine + [acceptor protein]-L-lysine = [E2 ubiquitin-conjugating enzyme]-L-cysteine + N(6)-ubiquitinyl-[acceptor protein]-L-lysine.. It participates in protein modification; protein ubiquitination. The chain is RING-H2 finger protein ATL11 (ATL11) from Arabidopsis thaliana (Mouse-ear cress).